Consider the following 278-residue polypeptide: 4-deoxy-L-threo-5-hexosulose-uronate ketol-isomerase (278 aa).

The Zn(2+) site is built by His-196, His-198, Glu-203, and His-245.

The protein belongs to the KduI family. Zn(2+) serves as cofactor.

It carries out the reaction 5-dehydro-4-deoxy-D-glucuronate = 3-deoxy-D-glycero-2,5-hexodiulosonate. It participates in glycan metabolism; pectin degradation; 2-dehydro-3-deoxy-D-gluconate from pectin: step 4/5. Functionally, catalyzes the isomerization of 5-dehydro-4-deoxy-D-glucuronate to 3-deoxy-D-glycero-2,5-hexodiulosonate. The polypeptide is 4-deoxy-L-threo-5-hexosulose-uronate ketol-isomerase (Salmonella dublin (strain CT_02021853)).